Reading from the N-terminus, the 191-residue chain is Fe/S biogenesis protein NfuA (191 aa).

Residues Cys149 and Cys152 each contribute to the [4Fe-4S] cluster site.

Belongs to the NfuA family. As to quaternary structure, homodimer. [4Fe-4S] cluster serves as cofactor.

In terms of biological role, involved in iron-sulfur cluster biogenesis. Binds a 4Fe-4S cluster, can transfer this cluster to apoproteins, and thereby intervenes in the maturation of Fe/S proteins. Could also act as a scaffold/chaperone for damaged Fe/S proteins. The sequence is that of Fe/S biogenesis protein NfuA from Klebsiella pneumoniae (strain 342).